Reading from the N-terminus, the 250-residue chain is Phosphoribosylaminoimidazole-succinocarboxamide synthase (250 aa).

The protein belongs to the SAICAR synthetase family.

It carries out the reaction 5-amino-1-(5-phospho-D-ribosyl)imidazole-4-carboxylate + L-aspartate + ATP = (2S)-2-[5-amino-1-(5-phospho-beta-D-ribosyl)imidazole-4-carboxamido]succinate + ADP + phosphate + 2 H(+). It participates in purine metabolism; IMP biosynthesis via de novo pathway; 5-amino-1-(5-phospho-D-ribosyl)imidazole-4-carboxamide from 5-amino-1-(5-phospho-D-ribosyl)imidazole-4-carboxylate: step 1/2. In Synechococcus sp. (strain CC9605), this protein is Phosphoribosylaminoimidazole-succinocarboxamide synthase.